The primary structure comprises 299 residues: MSEPIDLSQIAPTLKAEILAEALPYIRRYHGKSVVIKYGGNAMTEERLKQGFARDVILLKLVGINPVIVHGGGPQIDHALKKIGKAGTFIQGMRVTDEETMEVVEWVLGGEVQQDIVMLINHFGGHAVGLTGKDGGLIHARKLLMPDRDNPGQYIDIGQVGEVEAINPAVVKALQDDAFIPVISPIGFGEDGLSYNINADLVAGKLATVLNAEKLLMMTNIPGVMDKDGNLLTDLSAREIDALFEDGTISGGMLPKISSALDAAKSGVKSVHIVDGRIEHSVLLEILTEQPFGTMIRSH.

Substrate is bound by residues 72-73, Arg94, and Asn196; that span reads GG.

The protein belongs to the acetylglutamate kinase family. ArgB subfamily.

The protein resides in the cytoplasm. It carries out the reaction N-acetyl-L-glutamate + ATP = N-acetyl-L-glutamyl 5-phosphate + ADP. It participates in amino-acid biosynthesis; L-arginine biosynthesis; N(2)-acetyl-L-ornithine from L-glutamate: step 2/4. Functionally, catalyzes the ATP-dependent phosphorylation of N-acetyl-L-glutamate. This is Acetylglutamate kinase from Burkholderia cenocepacia (strain ATCC BAA-245 / DSM 16553 / LMG 16656 / NCTC 13227 / J2315 / CF5610) (Burkholderia cepacia (strain J2315)).